The chain runs to 314 residues: Methionyl-tRNA formyltransferase (314 aa).

112-115 (SLLP) provides a ligand contact to (6S)-5,6,7,8-tetrahydrofolate.

Belongs to the Fmt family.

The catalysed reaction is L-methionyl-tRNA(fMet) + (6R)-10-formyltetrahydrofolate = N-formyl-L-methionyl-tRNA(fMet) + (6S)-5,6,7,8-tetrahydrofolate + H(+). Its function is as follows. Attaches a formyl group to the free amino group of methionyl-tRNA(fMet). The formyl group appears to play a dual role in the initiator identity of N-formylmethionyl-tRNA by promoting its recognition by IF2 and preventing the misappropriation of this tRNA by the elongation apparatus. This chain is Methionyl-tRNA formyltransferase, found in Tolumonas auensis (strain DSM 9187 / NBRC 110442 / TA 4).